Consider the following 749-residue polypeptide: MSTTIIGFPRLGEFRELKFTTEKYFRKEISEEELLAAAKDLRAKHWNIVKEKGITEIPSNDFSHYDNFLDAAFLFNVVPASVQNLDLSDLERYFALGRGYQGEKGDVRALPMKKWFNTNYHYIVPKFEKDTQVKLAGHKIFDEFQEAKELGLNTRPVLVGPFTFLQLSDFEEGVKADDFVDSLVAAYQEVFAKLAELGATRIQLDEAALVKDLTAEEKALFLNLYNKLLADKKGLEVLLQTYFGDVRDVYADLVNLPVDAIGLDFVEGKKTLELVKGGFPADKTLYVGIVNGKNIWRNNYEKSLAVLEQIPAENIVLTSSCSLLHVPFTTANEEFEPALLNHFAFAVEKLDEIRDLDAIRNGQGSEALAANKELFATERVGENAELRARIAGLTDVDYTRLPAFAEREAIQEEAFKLPALPTTTIGSFPQTKEVRAKRLAYRKGELSQKEYDAFLAETIDEWIKWQEDIDFDVLVHGEFERNDMVEYFGQNLSGYLFSKNGWVQSYGMRGVKPPIIWGDVTRLNPITVKWSSYAQSRTNKPVKGMLTGPVTILNWSFPREDISIKDSTLQIALAIKDEVLDLEAAGVKIIQIDEAALREKLPLRRSDWYEDYLDWAIPAFRLVHSTVASDTQIHTHMCYSEFTDIIPAIDNMDADVISFEASRSNLEILDELKAKNFQTEVGPGVYDIHSPRVPNEGEIDNTIEAILAKVPSKKVWINPDCGLKTRGIPETKESLIRLVEAAKAAREKL.

5-methyltetrahydropteroyltri-L-glutamate contacts are provided by residues 15–18 (RELK) and Lys-114. Residues 425-427 (IGS) and Glu-478 contribute to the L-homocysteine site. L-methionine is bound by residues 425-427 (IGS) and Glu-478. Trp-555 provides a ligand contact to 5-methyltetrahydropteroyltri-L-glutamate. Asp-593 contributes to the L-homocysteine binding site. An L-methionine-binding site is contributed by Asp-593. Residue Glu-599 coordinates 5-methyltetrahydropteroyltri-L-glutamate. His-636, Cys-638, and Glu-660 together coordinate Zn(2+). The active-site Proton donor is the His-689. Position 721 (Cys-721) interacts with Zn(2+).

The protein belongs to the vitamin-B12 independent methionine synthase family. It depends on Zn(2+) as a cofactor.

It catalyses the reaction 5-methyltetrahydropteroyltri-L-glutamate + L-homocysteine = tetrahydropteroyltri-L-glutamate + L-methionine. The protein operates within amino-acid biosynthesis; L-methionine biosynthesis via de novo pathway; L-methionine from L-homocysteine (MetE route): step 1/1. Its function is as follows. Catalyzes the transfer of a methyl group from 5-methyltetrahydrofolate to homocysteine resulting in methionine formation. The polypeptide is 5-methyltetrahydropteroyltriglutamate--homocysteine methyltransferase (Streptococcus pneumoniae serotype 19F (strain G54)).